The following is a 309-amino-acid chain: Coproporphyrin III ferrochelatase (309 aa).

Residues Y12, R29, 45–46, S53, and Y124 contribute to the Fe-coproporphyrin III site; that span reads RY. Positions 182 and 263 each coordinate Fe(2+).

It belongs to the ferrochelatase family.

The protein resides in the cytoplasm. It catalyses the reaction Fe-coproporphyrin III + 2 H(+) = coproporphyrin III + Fe(2+). It functions in the pathway porphyrin-containing compound metabolism; protoheme biosynthesis. Involved in coproporphyrin-dependent heme b biosynthesis. Catalyzes the insertion of ferrous iron into coproporphyrin III to form Fe-coproporphyrin III. The sequence is that of Coproporphyrin III ferrochelatase from Listeria innocua serovar 6a (strain ATCC BAA-680 / CLIP 11262).